The chain runs to 477 residues: Proton-coupled amino acid transporter 3 (477 aa).

The span at 1 to 13 shows a compositional bias: basic and acidic residues; sequence MGKTPLLREDGRC. The segment at 1 to 42 is disordered; that stretch reads MGKTPLLREDGRCQRNTFGGSKASSKGSSSSSSNNTVSSKKK. Residues 1-54 lie on the Cytoplasmic side of the membrane; the sequence is MGKTPLLREDGRCQRNTFGGSKASSKGSSSSSSNNTVSSKKKPRRKADALMFIQ. Residues 19-38 are compositionally biased toward low complexity; it reads GGSKASSKGSSSSSSNNTVS. Residues 55 to 75 form a helical membrane-spanning segment; that stretch reads IFIHLLKSNIGTGFLGLPLAV. Residues 76–77 are Extracellular-facing; that stretch reads KN. Residues 78–98 traverse the membrane as a helical segment; the sequence is AGLLVGPVSLLAIGALTVHCM. Over 99–144 the chain is Cytoplasmic; the sequence is DILLNCACHLTSRLQRSFVNYEETTMYSLETCPSPWLRTHSVWGRY. The chain crosses the membrane as a helical span at residues 145–165; that stretch reads VVSFLLIVTQLGFCSVYFMFM. At 166–202 the chain is on the extracellular side; sequence ADNLQQIVEEAHFTSNVCQPRQSLVMTSILDTRFYML. A helical transmembrane segment spans residues 203-223; that stretch reads TILPFLILLVLVQNPQVLSIF. Over 224–225 the chain is Cytoplasmic; it reads ST. A helical transmembrane segment spans residues 226-246; sequence LATITTLSSLALIFEYLIQIP. Topologically, residues 247–259 are extracellular; the sequence is HHSHLPLVASWKT. Residues 260–280 form a helical membrane-spanning segment; it reads FLLFFGTAIFTFEGVGMVLPL. Residues 281–291 lie on the Cytoplasmic side of the membrane; the sequence is KSQMKSPQQFP. The chain crosses the membrane as a helical span at residues 292 to 312; the sequence is AVLYLGMSFVIFLYICLGTLG. The Extracellular portion of the chain corresponds to 313–344; that stretch reads YMKFGADTQASITLNLPNCWLYQSVKLMYSVG. Residues 345 to 365 traverse the membrane as a helical segment; it reads IFFTYALQFHVPAEIIVPYVV. Residues 366–374 lie on the Cytoplasmic side of the membrane; the sequence is SRASENWAL. The helical transmembrane segment at 375–395 threads the bilayer; that stretch reads FIDLTVRAALVCLTCFSAVLI. The Extracellular segment spans residues 396 to 399; the sequence is PRLD. The helical transmembrane segment at 400-420 threads the bilayer; it reads LVISLVGSVSSSALALIIPPL. At 421–439 the chain is on the cytoplasmic side; sequence LEIATFYSENISCTTIAKD. The chain crosses the membrane as a helical span at residues 440–460; the sequence is IMISILGLLGCVLGTYQALYE. The Extracellular portion of the chain corresponds to 461–477; the sequence is MTQQSRFPMLNSTNVHT.

This sequence belongs to the amino acid/polyamine transporter 2 family.

The protein resides in the membrane. The sequence is that of Proton-coupled amino acid transporter 3 (Slc36a3) from Rattus norvegicus (Rat).